A 325-amino-acid chain; its full sequence is Lactonase drp35 (325 aa).

Ca(2+) contacts are provided by Glu46, Thr108, Gly110, Asp128, Thr131, Tyr133, Asp136, Asn183, Asp234, and Ser235. Asp234 (proton donor) is an active-site residue.

Belongs to the SMP-30/CGR1 family. It depends on Ca(2+) as a cofactor.

Its subcellular location is the cytoplasm. Functionally, exhibits lactonase activity. Acts in cells with perturbed membrane integrity and is possibly related to the membrane homeostasis. The protein is Lactonase drp35 (drp35) of Staphylococcus epidermidis (strain ATCC 35984 / DSM 28319 / BCRC 17069 / CCUG 31568 / BM 3577 / RP62A).